We begin with the raw amino-acid sequence, 184 residues long: Protein N-terminal glutamine amidohydrolase (184 aa).

Residues Cys-14, His-63, and Asp-78 contribute to the active site.

It belongs to the NTAQ1 family. Monomer.

The enzyme catalyses N-terminal L-glutaminyl-[protein] + H2O = N-terminal L-glutamyl-[protein] + NH4(+). Mediates the side-chain deamidation of N-terminal glutamine residues to glutamate, an important step in N-end rule pathway of protein degradation. Conversion of the resulting N-terminal glutamine to glutamate renders the protein susceptible to arginylation, polyubiquitination and degradation as specified by the N-end rule. Does not act on substrates with internal or C-terminal glutamine and does not act on non-glutamine residues in any position. This Caenorhabditis elegans protein is Protein N-terminal glutamine amidohydrolase.